Here is a 216-residue protein sequence, read N- to C-terminus: Ribosomal RNA large subunit methyltransferase E (216 aa).

The S-adenosyl-L-methionine site is built by G60, W62, D80, D96, and D121. Catalysis depends on K161, which acts as the Proton acceptor.

It belongs to the class I-like SAM-binding methyltransferase superfamily. RNA methyltransferase RlmE family.

The protein localises to the cytoplasm. The enzyme catalyses uridine(2552) in 23S rRNA + S-adenosyl-L-methionine = 2'-O-methyluridine(2552) in 23S rRNA + S-adenosyl-L-homocysteine + H(+). Its function is as follows. Specifically methylates the uridine in position 2552 of 23S rRNA at the 2'-O position of the ribose in the fully assembled 50S ribosomal subunit. This is Ribosomal RNA large subunit methyltransferase E from Pseudomonas syringae pv. syringae (strain B728a).